A 561-amino-acid polypeptide reads, in one-letter code: Amidophosphoribosyltransferase 2, chloroplastic (561 aa).

Residues 1–27 (MAATSSISSSLSLNAKPNKLSNNNNNN) show a composition bias toward low complexity. The interval 1 to 36 (MAATSSISSSLSLNAKPNKLSNNNNNNKPHRFLRNP) is disordered. A chloroplast-targeting transit peptide spans 1 to 53 (MAATSSISSSLSLNAKPNKLSNNNNNNKPHRFLRNPFLNPSSSSFSPLPASIS). The active-site Nucleophile is the Cys87. The Glutamine amidotransferase type-2 domain maps to 87 to 307 (CGVVGIYGDS…PGEVLVVDKD (221 aa)). Cys323, Cys469, Cys520, and Cys523 together coordinate [4Fe-4S] cluster.

In the C-terminal section; belongs to the purine/pyrimidine phosphoribosyltransferase family. [4Fe-4S] cluster is required as a cofactor. The cofactor is Mg(2+). Mostly expressed in leaves, and, to a lower extent, in cotyledons.

It is found in the plastid. Its subcellular location is the chloroplast stroma. The catalysed reaction is 5-phospho-beta-D-ribosylamine + L-glutamate + diphosphate = 5-phospho-alpha-D-ribose 1-diphosphate + L-glutamine + H2O. Its pathway is purine metabolism; IMP biosynthesis via de novo pathway; N(1)-(5-phospho-D-ribosyl)glycinamide from 5-phospho-alpha-D-ribose 1-diphosphate: step 1/2. Its activity is regulated as follows. Inhibited by the phenyltriazole acetic acid compound [5-(4-chlorophenyl)-1-isopropyl-1H-[1,2,4]triazol-3-yl]-acetic acid (DAS734), a bleaching herbicide. In terms of biological role, catalyzes the first committed step of 'de novo purine biosynthesis from glutamine. Required for chloroplast biogenesis and cell division. Confers sensitivity to the phenyltriazole acetic acid compound [5-(4-chlorophenyl)-1-isopropyl-1H-[1,2,4]triazol-3-yl]-acetic acid (DAS734), a bleaching herbicide. In Arabidopsis thaliana (Mouse-ear cress), this protein is Amidophosphoribosyltransferase 2, chloroplastic (ASE2).